A 160-amino-acid chain; its full sequence is Cyanate hydratase (160 aa).

Active-site residues include R100, E103, and S126.

The protein belongs to the cyanase family.

The catalysed reaction is cyanate + hydrogencarbonate + 3 H(+) = NH4(+) + 2 CO2. Catalyzes the reaction of cyanate with bicarbonate to produce ammonia and carbon dioxide. The chain is Cyanate hydratase from Neosartorya fischeri (strain ATCC 1020 / DSM 3700 / CBS 544.65 / FGSC A1164 / JCM 1740 / NRRL 181 / WB 181) (Aspergillus fischerianus).